A 244-amino-acid polypeptide reads, in one-letter code: tRNA (guanine-N(7)-)-methyltransferase (244 aa).

Residues Glu42, Asp67, Asp94, and Asp116 each coordinate S-adenosyl-L-methionine. Residue Asp116 is part of the active site. Substrate is bound by residues Lys120, Asp150, and 191–194; that span reads TYYE.

Belongs to the class I-like SAM-binding methyltransferase superfamily. TrmB family.

It carries out the reaction guanosine(46) in tRNA + S-adenosyl-L-methionine = N(7)-methylguanosine(46) in tRNA + S-adenosyl-L-homocysteine. It participates in tRNA modification; N(7)-methylguanine-tRNA biosynthesis. Catalyzes the formation of N(7)-methylguanine at position 46 (m7G46) in tRNA. This Porphyromonas gingivalis (strain ATCC BAA-308 / W83) protein is tRNA (guanine-N(7)-)-methyltransferase.